The chain runs to 641 residues: ATP-dependent zinc metalloprotease FtsH 2 (641 aa).

Residues 1–100 (MLAYYVSVNQ…IDVKVIHNFW (100 aa)) are Periplasmic-facing. A helical transmembrane segment spans residues 101-121 (GQAFLSVLPFLLFILALYFLF). At 122–641 (RQQIRMAGRG…LLPGLEGAPA (520 aa)) the chain is on the cytoplasmic side. 193–200 (GPPGTGKT) contributes to the ATP binding site. Histidine 415 contacts Zn(2+). Glutamate 416 is a catalytic residue. Zn(2+)-binding residues include histidine 419 and aspartate 491. The interval 593-641 (KTGKMTNPPSKNSSPVSNGGEASSTKSPARQEETTKDGGLLPGLEGAPA) is disordered. Composition is skewed to low complexity over residues 599–610 (NPPSKNSSPVSN) and 630–641 (GGLLPGLEGAPA).

The protein in the central section; belongs to the AAA ATPase family. This sequence in the C-terminal section; belongs to the peptidase M41 family. Homohexamer. Requires Zn(2+) as cofactor.

Its subcellular location is the cell inner membrane. In terms of biological role, acts as a processive, ATP-dependent zinc metallopeptidase for both cytoplasmic and membrane proteins. Plays a role in the quality control of integral membrane proteins. This is ATP-dependent zinc metalloprotease FtsH 2 from Methylacidiphilum infernorum (isolate V4) (Methylokorus infernorum (strain V4)).